The primary structure comprises 335 residues: Zinc finger protein 396 (335 aa).

Residues 52–134 (RQQFRQFGYQ…TMLEDVEREL (83 aa)) enclose the SCAN box domain. 3 consecutive C2H2-type zinc fingers follow at residues 251–273 (QKCD…QRIH), 279–301 (YACD…RRTH), and 307–329 (YKCH…RKRH).

Belongs to the krueppel C2H2-type zinc-finger protein family. In terms of assembly, isoforms 1 and 2 can both homo- and hetero-associate. In terms of tissue distribution, expressed strongly in liver, moderately in skeletal muscle and weakly in kidney, pancreas, spleen and prostate.

Its subcellular location is the nucleus. It localises to the cytoplasm. Isoform 1 and isoform 2 act as DNA-dependent transcriptional repressors. The polypeptide is Zinc finger protein 396 (ZNF396) (Homo sapiens (Human)).